The primary structure comprises 479 residues: Glutamyl-tRNA(Gln) amidotransferase subunit A (479 aa).

Catalysis depends on charge relay system residues Lys71 and Ser146. Ser170 (acyl-ester intermediate) is an active-site residue.

This sequence belongs to the amidase family. GatA subfamily. In terms of assembly, heterotrimer of A, B and C subunits.

It catalyses the reaction L-glutamyl-tRNA(Gln) + L-glutamine + ATP + H2O = L-glutaminyl-tRNA(Gln) + L-glutamate + ADP + phosphate + H(+). Allows the formation of correctly charged Gln-tRNA(Gln) through the transamidation of misacylated Glu-tRNA(Gln) in organisms which lack glutaminyl-tRNA synthetase. The reaction takes place in the presence of glutamine and ATP through an activated gamma-phospho-Glu-tRNA(Gln). The sequence is that of Glutamyl-tRNA(Gln) amidotransferase subunit A from Lactobacillus johnsonii (strain CNCM I-12250 / La1 / NCC 533).